Consider the following 525-residue polypeptide: Bifunctional purine biosynthesis protein PurH (525 aa).

The 147-residue stretch at 10-156 (HRIPIRRALV…KNHPSVAIVT (147 aa)) folds into the MGS-like domain.

Belongs to the PurH family.

The enzyme catalyses (6R)-10-formyltetrahydrofolate + 5-amino-1-(5-phospho-beta-D-ribosyl)imidazole-4-carboxamide = 5-formamido-1-(5-phospho-D-ribosyl)imidazole-4-carboxamide + (6S)-5,6,7,8-tetrahydrofolate. It carries out the reaction IMP + H2O = 5-formamido-1-(5-phospho-D-ribosyl)imidazole-4-carboxamide. It participates in purine metabolism; IMP biosynthesis via de novo pathway; 5-formamido-1-(5-phospho-D-ribosyl)imidazole-4-carboxamide from 5-amino-1-(5-phospho-D-ribosyl)imidazole-4-carboxamide (10-formyl THF route): step 1/1. Its pathway is purine metabolism; IMP biosynthesis via de novo pathway; IMP from 5-formamido-1-(5-phospho-D-ribosyl)imidazole-4-carboxamide: step 1/1. This Nocardioides sp. (strain ATCC BAA-499 / JS614) protein is Bifunctional purine biosynthesis protein PurH.